Consider the following 495-residue polypeptide: Chromosomal replication initiator protein DnaA (495 aa).

Residues 1 to 91 (MTADPDPPFV…ITALSRHLGQ (91 aa)) form a domain I, interacts with DnaA modulators region. Residues 91-154 (QRVELGVRIA…TPAAEDPNAV (64 aa)) are domain II. The domain III, AAA+ region stretch occupies residues 155–371 (SLNRRYTFDT…GALIRVTAFA (217 aa)). Residues glycine 199, glycine 201, lysine 202, and threonine 203 each contribute to the ATP site. The interval 372-495 (SLNKTPIDKS…TTRIRQRAKR (124 aa)) is domain IV, binds dsDNA.

It belongs to the DnaA family. Oligomerizes as a right-handed, spiral filament on DNA at oriC.

The protein localises to the cytoplasm. Plays an essential role in the initiation and regulation of chromosomal replication. ATP-DnaA binds to the origin of replication (oriC) to initiate formation of the DNA replication initiation complex once per cell cycle. Binds the DnaA box (a 9 base pair repeat at the origin) and separates the double-stranded (ds)DNA. Forms a right-handed helical filament on oriC DNA; dsDNA binds to the exterior of the filament while single-stranded (ss)DNA is stabiized in the filament's interior. The ATP-DnaA-oriC complex binds and stabilizes one strand of the AT-rich DNA unwinding element (DUE), permitting loading of DNA polymerase. After initiation quickly degrades to an ADP-DnaA complex that is not apt for DNA replication. Binds acidic phospholipids. The sequence is that of Chromosomal replication initiator protein DnaA from Mycobacterium sp. (strain JLS).